A 786-amino-acid chain; its full sequence is LPS-assembly protein LptD (786 aa).

Residues 1 to 39 (MPPKPLFPNVFPGDGAPRKRRLALALLAVPGLVPAVSYA) form the signal peptide. Residues 767-786 (PGYTPLPPPPPPMSRFSNYE) are disordered. Residues 770–779 (TPLPPPPPPM) show a composition bias toward pro residues.

Belongs to the LptD family. As to quaternary structure, component of the lipopolysaccharide transport and assembly complex. Interacts with LptE and LptA.

The protein localises to the cell outer membrane. In terms of biological role, together with LptE, is involved in the assembly of lipopolysaccharide (LPS) at the surface of the outer membrane. This chain is LPS-assembly protein LptD, found in Burkholderia lata (strain ATCC 17760 / DSM 23089 / LMG 22485 / NCIMB 9086 / R18194 / 383).